The following is a 450-amino-acid chain: Ig mu chain C region (450 aa).

This chain is Ig mu chain C region, found in Canis lupus familiaris (Dog).